The following is a 63-amino-acid chain: Laccase-C1 (63 aa).

The protein belongs to the multicopper oxidase family. As to quaternary structure, monomer. The cofactor is Cu cation. Glycosylated; contains 16% carbohydrates.

The protein localises to the secreted. The enzyme catalyses 4 hydroquinone + O2 = 4 benzosemiquinone + 2 H2O. Inhibited by sodium azide. Its function is as follows. Lignin degradation and detoxification of lignin-derived products. Oxidation of a broad range of substrates including mono-, di- and polyphenols, aromatic amines and methoxy-substituted phenols accompanied by reduction of oxygen to water. In Cerrena unicolor (Canker rot fungus), this protein is Laccase-C1.